The following is a 333-amino-acid chain: Phosphate acyltransferase (333 aa).

This sequence belongs to the PlsX family. As to quaternary structure, homodimer. Probably interacts with PlsY.

The protein localises to the cytoplasm. The catalysed reaction is a fatty acyl-[ACP] + phosphate = an acyl phosphate + holo-[ACP]. It functions in the pathway lipid metabolism; phospholipid metabolism. Functionally, catalyzes the reversible formation of acyl-phosphate (acyl-PO(4)) from acyl-[acyl-carrier-protein] (acyl-ACP). This enzyme utilizes acyl-ACP as fatty acyl donor, but not acyl-CoA. The polypeptide is Phosphate acyltransferase (Helicobacter hepaticus (strain ATCC 51449 / 3B1)).